A 104-amino-acid chain; its full sequence is uncharacterized protein (104 aa).

This is an uncharacterized protein from Acidithiobacillus ferridurans.